Consider the following 734-residue polypeptide: Photosystem I P700 chlorophyll a apoprotein A2 (734 aa).

Helical transmembrane passes span 46–69 (IFASHFGQLAIIFLWTSGNLFHVA), 135–158 (LYSGALFLLFLSAISLIAGWLHLQ), 175–199 (LNHHLSGLFGVSPLAWTGHLVHVAI), 273–291 (MAHHHLAIAFIFLVAGHMY), 330–353 (LHFQLGLALASLGVITSLVAQHMY), 369–395 (AALYTHHQYIAGFIMTGAFAHGAIFFI), 417–439 (AIISHLSWASLFLGFHTLGLYVH), and 517–535 (FLVHHAIALGLHTTTLILV). Cysteine 559 and cysteine 568 together coordinate [4Fe-4S] cluster. 2 helical membrane passes run 575–596 (AFYLAVFWMLNTIGWVTFYWHW) and 643–665 (LSVWAWMFLFGHLVWATGFMFLI). Histidine 654, methionine 662, and tyrosine 670 together coordinate chlorophyll a. Tryptophan 671 provides a ligand contact to phylloquinone. A helical membrane pass occupies residues 707-727 (LVGLAHFSVGYIFTYAAFLIA).

Belongs to the PsaA/PsaB family. In terms of assembly, the PsaA/B heterodimer binds the P700 chlorophyll special pair and subsequent electron acceptors. PSI consists of a core antenna complex that captures photons, and an electron transfer chain that converts photonic excitation into a charge separation. The eukaryotic PSI reaction center is composed of at least 11 subunits. P700 is a chlorophyll a/chlorophyll a' dimer, A0 is one or more chlorophyll a, A1 is one or both phylloquinones and FX is a shared 4Fe-4S iron-sulfur center. serves as cofactor.

It localises to the plastid. The protein resides in the chloroplast thylakoid membrane. The enzyme catalyses reduced [plastocyanin] + hnu + oxidized [2Fe-2S]-[ferredoxin] = oxidized [plastocyanin] + reduced [2Fe-2S]-[ferredoxin]. Its function is as follows. PsaA and PsaB bind P700, the primary electron donor of photosystem I (PSI), as well as the electron acceptors A0, A1 and FX. PSI is a plastocyanin-ferredoxin oxidoreductase, converting photonic excitation into a charge separation, which transfers an electron from the donor P700 chlorophyll pair to the spectroscopically characterized acceptors A0, A1, FX, FA and FB in turn. Oxidized P700 is reduced on the lumenal side of the thylakoid membrane by plastocyanin. This is Photosystem I P700 chlorophyll a apoprotein A2 from Antirrhinum majus (Garden snapdragon).